The primary structure comprises 431 residues: Pyroglutamylated RF-amide peptide receptor (431 aa).

Residues 1–46 lie on the Extracellular side of the membrane; it reads MQALNITPEQFSRLLRDHNLTREQFIALYRLRPLVYTPELPGRAKL. A glycan (N-linked (GlcNAc...) asparagine) is linked at N19. A helical transmembrane segment spans residues 47–67; the sequence is ALVLTGVLIFALALFGNALVF. Over 68–81 the chain is Cytoplasmic; sequence YVVTRSKAMRTVTN. The helical transmembrane segment at 82–102 threads the bilayer; that stretch reads IFICSLALSDLLITFFCIPVT. The Extracellular segment spans residues 103-120; that stretch reads MLQNISDNWLGGAFICKM. The chain crosses the membrane as a helical span at residues 121-141; the sequence is VPFVQSTAVVTEILTMTCIAV. Over 142–162 the chain is Cytoplasmic; it reads ERHQGLVHPFKMKWQYTNRRA. A helical transmembrane segment spans residues 163 to 183; it reads FTMLGVVWLVAVIVGSPMWHV. Topologically, residues 184–212 are extracellular; the sequence is QQLEIKYDFLYEKEHICCLEEWTSPVHQK. Residues 213-233 form a helical membrane-spanning segment; that stretch reads IYTTFILVILFLLPLMVMLIL. Over 234–271 the chain is Cytoplasmic; the sequence is YSKIGYELWIKKRVGDGSVLRTIHGKEMSKIARKKKRA. A helical membrane pass occupies residues 272-292; it reads VIMMVTVVALFAVCWAPFHVV. Residues 293–311 lie on the Extracellular side of the membrane; the sequence is HMMIEYSNFEKEYDDVTIK. A helical transmembrane segment spans residues 312–332; the sequence is MIFAIVQIIGFSNSICNPIVY. Topologically, residues 333–431 are cytoplasmic; it reads AFMNENFKKN…AENSPLDSGH (99 aa).

It belongs to the G-protein coupled receptor 1 family. In terms of tissue distribution, expressed widely in the brain with high levels in the hypothalamus, trigeminal ganglia and vestibular neurons, and moderate levels in the amygdala, cortex, pituitary, hippocampus, thalamus, caudate nucleus and medulla oblongata. In peripheral tissues, expressed at high levels in the retina and at moderate levels in the heart, kidney, testis and thyroid.

It is found in the cell membrane. Receptor for the orexigenic neuropeptide QRFP. The activity of this receptor is mediated by G proteins that modulate adenylate cyclase activity and intracellular calcium levels. This is Pyroglutamylated RF-amide peptide receptor (QRFPR) from Homo sapiens (Human).